A 673-amino-acid polypeptide reads, in one-letter code: Ion-translocating oxidoreductase complex subunit C (673 aa).

4Fe-4S ferredoxin-type domains follow at residues 368–397 (MGAPQEETSCIRCSACADACPADLLPQQLY) and 407–436 (KATAHHIADCIECGACAWVCPSNIPLVQYF). 8 residues coordinate [4Fe-4S] cluster: cysteine 377, cysteine 380, cysteine 383, cysteine 387, cysteine 416, cysteine 419, cysteine 422, and cysteine 426. The disordered stretch occupies residues 529–554 (EARKAQARAKQAGHPMADSATSGDDP).

It belongs to the 4Fe4S bacterial-type ferredoxin family. RnfC subfamily. The complex is composed of six subunits: RsxA, RsxB, RsxC, RsxD, RsxE and RsxG. [4Fe-4S] cluster serves as cofactor.

Its subcellular location is the cell inner membrane. Part of a membrane-bound complex that couples electron transfer with translocation of ions across the membrane. Required to maintain the reduced state of SoxR. The sequence is that of Ion-translocating oxidoreductase complex subunit C from Salmonella arizonae (strain ATCC BAA-731 / CDC346-86 / RSK2980).